Reading from the N-terminus, the 236-residue chain is Ureidoacrylate amidohydrolase RutB (236 aa).

Catalysis depends on Asp-24, which acts as the Proton acceptor. Lys-133 is a catalytic residue. Cys-166 acts as the Nucleophile in catalysis.

This sequence belongs to the isochorismatase family. RutB subfamily.

The enzyme catalyses (Z)-3-ureidoacrylate + H2O + H(+) = (Z)-3-aminoacrylate + NH4(+) + CO2. It catalyses the reaction (Z)-3-ureidoacrylate + H2O = (Z)-3-aminoacrylate + carbamate + H(+). The catalysed reaction is (Z)-2-methylureidoacrylate + H2O + H(+) = (Z)-2-methylaminoacrylate + NH4(+) + CO2. Functionally, hydrolyzes ureidoacrylate to form aminoacrylate and carbamate. The carbamate hydrolyzes spontaneously, thereby releasing one of the nitrogen atoms of the pyrimidine ring as ammonia and one of its carbon atoms as CO2. In Klebsiella pneumoniae (strain 342), this protein is Ureidoacrylate amidohydrolase RutB.